The chain runs to 349 residues: MENIETILRLAEDKILLVQNLKALQEYKVEFLGKNGIVTGELKKLGSLNEQERKEFGLKINKLKDKIQNIIKAKAEILEEQELNFKLAADKIDLTIPARRYKQGSIHPITQCSEELIQVFSQFGFTIENGPNIENDFYNFTALNFEDDHPARQMHDTFYLKSQENNKPLLLRTHTSTVQIRAMKNGKPPFRFIAPGRTYRSDSDMTHTPMFHQIEGLVMDKNINMGHLKYVITTFIKSFFENSNIELRFRPSFFPFTEPSSEVDIRMNKNDKWLEVLGCGMVHPNVLKNVGIDSSEYQGFAFGLGVERFAMLKYNIKDLRQFFEGDMRWLKHYNFGSFDIPNLAGGLTK.

Mg(2+) is bound at residue glutamate 258.

This sequence belongs to the class-II aminoacyl-tRNA synthetase family. Phe-tRNA synthetase alpha subunit type 1 subfamily. In terms of assembly, tetramer of two alpha and two beta subunits. Requires Mg(2+) as cofactor.

The protein resides in the cytoplasm. The catalysed reaction is tRNA(Phe) + L-phenylalanine + ATP = L-phenylalanyl-tRNA(Phe) + AMP + diphosphate + H(+). The polypeptide is Phenylalanine--tRNA ligase alpha subunit (Rickettsia africae (strain ESF-5)).